Consider the following 90-residue polypeptide: Small ribosomal subunit protein uS15c (90 aa).

This sequence belongs to the universal ribosomal protein uS15 family. Part of the 30S ribosomal subunit.

The protein resides in the plastid. Its subcellular location is the chloroplast. In Gossypium barbadense (Sea Island cotton), this protein is Small ribosomal subunit protein uS15c (rps15).